The primary structure comprises 161 residues: Large ribosomal subunit protein uL15 (161 aa).

Positions 1–43 are disordered; sequence MKLSDIADNAGARKKRMRVGRGIGSGKGKTSGRGGKGQTARSG. A compositionally biased stretch (gly residues) spans 21 to 37; the sequence is RGIGSGKGKTSGRGGKG.

It belongs to the universal ribosomal protein uL15 family. Part of the 50S ribosomal subunit.

Its function is as follows. Binds to the 23S rRNA. The polypeptide is Large ribosomal subunit protein uL15 (Bradyrhizobium sp. (strain BTAi1 / ATCC BAA-1182)).